A 345-amino-acid chain; its full sequence is Phosphoribosylformylglycinamidine cyclo-ligase (345 aa).

This sequence belongs to the AIR synthase family.

The protein resides in the cytoplasm. It carries out the reaction 2-formamido-N(1)-(5-O-phospho-beta-D-ribosyl)acetamidine + ATP = 5-amino-1-(5-phospho-beta-D-ribosyl)imidazole + ADP + phosphate + H(+). It functions in the pathway purine metabolism; IMP biosynthesis via de novo pathway; 5-amino-1-(5-phospho-D-ribosyl)imidazole from N(2)-formyl-N(1)-(5-phospho-D-ribosyl)glycinamide: step 2/2. The chain is Phosphoribosylformylglycinamidine cyclo-ligase from Enterobacter sp. (strain 638).